A 504-amino-acid polypeptide reads, in one-letter code: ATP synthase subunit alpha, chloroplastic (504 aa).

170–177 lines the ATP pocket; that stretch reads GDRQTGKT.

The protein belongs to the ATPase alpha/beta chains family. F-type ATPases have 2 components, CF(1) - the catalytic core - and CF(0) - the membrane proton channel. CF(1) has five subunits: alpha(3), beta(3), gamma(1), delta(1), epsilon(1). CF(0) has four main subunits: a, b, b' and c.

Its subcellular location is the plastid. It localises to the chloroplast thylakoid membrane. It carries out the reaction ATP + H2O + 4 H(+)(in) = ADP + phosphate + 5 H(+)(out). In terms of biological role, produces ATP from ADP in the presence of a proton gradient across the membrane. The alpha chain is a regulatory subunit. The sequence is that of ATP synthase subunit alpha, chloroplastic from Ostreococcus tauri.